Consider the following 504-residue polypeptide: Ammonium transporter 1 member 4 (504 aa).

The next 12 helical transmembrane spans lie at 12 to 32 (LIPL…AEYI), 55 to 75 (LLFS…LCAG), 90 to 110 (VIDA…FAFG), 136 to 156 (YFLY…GSIA), 161 to 181 (FVAY…IVSH), 207 to 227 (FAGS…GALI), 251 to 271 (LVVL…PGSF), 292 to 314 (AVGR…TLFG), 318 to 338 (IDGY…FAAI), 344 to 364 (VVEP…LMGC), 377 to 397 (LEAA…TGLF), and 430 to 450 (VVQI…LFFI). Phosphothreonine is present on T471.

This sequence belongs to the ammonia transporter channel (TC 1.A.11.2) family. As to expression, specifically expressed in pollen grains and tubes.

It localises to the cell membrane. In terms of biological role, high affinity ammonium transporter in the plasma membrane. This is Ammonium transporter 1 member 4 (AMT1-4) from Arabidopsis thaliana (Mouse-ear cress).